The primary structure comprises 158 residues: Transcription elongation factor GreA (158 aa).

Residues 4–75 adopt a coiled-coil conformation; sequence EKTYPMTQEG…TQLENMIRNA (72 aa).

Belongs to the GreA/GreB family.

In terms of biological role, necessary for efficient RNA polymerase transcription elongation past template-encoded arresting sites. The arresting sites in DNA have the property of trapping a certain fraction of elongating RNA polymerases that pass through, resulting in locked ternary complexes. Cleavage of the nascent transcript by cleavage factors such as GreA or GreB allows the resumption of elongation from the new 3'terminus. GreA releases sequences of 2 to 3 nucleotides. The chain is Transcription elongation factor GreA from Bacillus anthracis (strain A0248).